A 305-amino-acid chain; its full sequence is Glycine--tRNA ligase alpha subunit (305 aa).

This sequence belongs to the class-II aminoacyl-tRNA synthetase family. In terms of assembly, tetramer of two alpha and two beta subunits.

The protein resides in the cytoplasm. It carries out the reaction tRNA(Gly) + glycine + ATP = glycyl-tRNA(Gly) + AMP + diphosphate. The sequence is that of Glycine--tRNA ligase alpha subunit from Streptococcus suis (strain 98HAH33).